The sequence spans 486 residues: Zinc transporter 6 (486 aa).

The Cytoplasmic segment spans residues 1 to 60 (MVALDVLGITDSDAPVYRQKQEADTLVLGTIHPFRKAHRSVLGKLAQEFRLVTSDRRSWK). A helical transmembrane segment spans residues 61–81 (ILLFGVLNVVCTGCLLMWCSS). The Extracellular portion of the chain corresponds to 82-91 (TNSMALTAYT). Residues 92-112 (YLTIFDLFSLITCLLSLWVTM) form a helical membrane-spanning segment. The Cytoplasmic portion of the chain corresponds to 113–125 (KKPSQIYSFGFQR). A helical membrane pass occupies residues 126 to 146 (FEVLAVFSSTVLVQLGSLFIL). Topologically, residues 147–161 (KESVERFVEQPEVHT) are extracellular. Residues 162–182 (GRLLVGTFVALFFNLLTLLSV) form a helical membrane-spanning segment. The Cytoplasmic segment spans residues 183-227 (KNKPFVFVSEAASTSWLQEHVADLSRSLCGLIPALSSFLLPRMNP). A helical membrane pass occupies residues 228–248 (FVLINLAGAFALGITYMLIEI). The Extracellular segment spans residues 249–255 (NNYNAMD). Residues 256–276 (TASAVAIALMTFGTMYPMSVY) traverse the membrane as a helical segment. At 277–486 (SGKVLLQTTP…SGTYTGPPRP (210 aa)) the chain is on the cytoplasmic side. A compositionally biased stretch (low complexity) spans 394–411 (PSRAQGSEPTPATSTPAK). Positions 394-425 (PSRAQGSEPTPATSTPAKPSSPPPEFSFHTPG) are disordered.

Belongs to the cation diffusion facilitator (CDF) transporter (TC 2.A.4) family. SLC30A subfamily. In terms of assembly, heterodimer with SLC30A5; form a functional zinc ion transmembrane transporter.

It is found in the golgi apparatus. The protein localises to the trans-Golgi network membrane. Has probably no intrinsic transporter activity but together with SLC30A5 forms a functional zinc ion:proton antiporter heterodimer, mediating zinc entry into the lumen of organelles along the secretory pathway. As part of that zinc ion:proton antiporter, contributes to zinc ion homeostasis within the early secretory pathway and regulates the activation and folding of enzymes like alkaline phosphatases and enzymes involved in phosphatidylinositol glycan anchor biosynthesis. This chain is Zinc transporter 6 (slc30a6), found in Danio rerio (Zebrafish).